We begin with the raw amino-acid sequence, 272 residues long: Phosphate import ATP-binding protein PstB (272 aa).

Residues 26 to 267 form the ABC transporter domain; the sequence is VAARNLNFYY…PADRRTQDYI (242 aa). 58–65 is a binding site for ATP; the sequence is GPSGCGKS.

The protein belongs to the ABC transporter superfamily. Phosphate importer (TC 3.A.1.7) family. In terms of assembly, the complex is composed of two ATP-binding proteins (PstB), two transmembrane proteins (PstC and PstA) and a solute-binding protein (PstS).

Its subcellular location is the cell inner membrane. It carries out the reaction phosphate(out) + ATP + H2O = ADP + 2 phosphate(in) + H(+). Its function is as follows. Part of the ABC transporter complex PstSACB involved in phosphate import. Responsible for energy coupling to the transport system. This chain is Phosphate import ATP-binding protein PstB, found in Nitrobacter hamburgensis (strain DSM 10229 / NCIMB 13809 / X14).